The following is a 293-amino-acid chain: Phycoerythrin class 2 subunit gamma, linker polypeptide (293 aa).

Cysteine 49 lines the phycourobilin pocket. One can recognise a PBS-linker domain in the interval alanine 50–aspartate 229.

Post-translationally, contains one covalently linked phycourobilin chromophore.

Its subcellular location is the cellular thylakoid membrane. Its function is as follows. This protein is a bile pigment-bearing rod linker polypeptide that associates with C-phycoerythrin. This Synechococcus sp. (strain WH8020) protein is Phycoerythrin class 2 subunit gamma, linker polypeptide (mpeC).